We begin with the raw amino-acid sequence, 94 residues long: Selenoprotein K (94 aa).

A helical membrane pass occupies residues 20 to 42 (LSFITDFFWGIAEFVVLFFRTLL). Residues 48–94 (KRRGYGGSSDSRYDDGRGPPGNPPRRMGRINHLRGPNPPPMAGGUGR) are disordered. A non-standard amino acid (selenocysteine) is located at residue Sec-92.

Belongs to the selenoprotein K family. Interacts with DERL1, DERL2, DERL3 and SELENOS. The SELENOK-SELENOS complex interacts with VCP. Interacts with ZDHHC6. Post-translationally, cleaved by CAPN2/m-calpain in resting macrophages but not in activated macrophages. Macrophage activation up-regulates expression of the calpain inhibitor CAST/calpastatin, resulting in inhibition of CAPN2 activity. In terms of processing, truncated SELENOK proteins produced by failed UGA/Sec decoding are ubiquitinated by the CRL2(KLHDC2) complex, which recognizes the diglycine (Gly-Gly) at the C-terminus of truncated SELENOK proteins.

The protein resides in the endoplasmic reticulum membrane. The protein localises to the cell membrane. Functionally, required for Ca(2+) flux in immune cells and plays a role in T-cell proliferation and in T-cell and neutrophil migration. Involved in endoplasmic reticulum-associated degradation (ERAD) of soluble glycosylated proteins. Required for palmitoylation and cell surface expression of CD36 and involved in macrophage uptake of low-density lipoprotein and in foam cell formation. Together with ZDHHC6, required for palmitoylation of ITPR1 in immune cells, leading to regulate ITPR1 stability and function. Plays a role in protection of cells from ER stress-induced apoptosis. Protects cells from oxidative stress when overexpressed in cardiomyocytes. The polypeptide is Selenoprotein K (Sus scrofa (Pig)).